Here is a 302-residue protein sequence, read N- to C-terminus: Oxygen-dependent coproporphyrinogen-III oxidase (302 aa).

Residue S94 participates in substrate binding. A divalent metal cation is bound by residues H98 and H108. H108 (proton donor) is an active-site residue. 110–112 (NVR) contacts substrate. Residues H147 and H177 each contribute to the a divalent metal cation site. Residues 242–277 (YVEFNLVYDRGTLFGLQTGGRTESILMSMPPLARWE) form an important for dimerization region. Residue 260–262 (GGR) participates in substrate binding.

This sequence belongs to the aerobic coproporphyrinogen-III oxidase family. As to quaternary structure, homodimer. The cofactor is a divalent metal cation.

The protein resides in the cytoplasm. It catalyses the reaction coproporphyrinogen III + O2 + 2 H(+) = protoporphyrinogen IX + 2 CO2 + 2 H2O. It functions in the pathway porphyrin-containing compound metabolism; protoporphyrin-IX biosynthesis; protoporphyrinogen-IX from coproporphyrinogen-III (O2 route): step 1/1. In terms of biological role, involved in the heme biosynthesis. Catalyzes the aerobic oxidative decarboxylation of propionate groups of rings A and B of coproporphyrinogen-III to yield the vinyl groups in protoporphyrinogen-IX. The protein is Oxygen-dependent coproporphyrinogen-III oxidase of Aeromonas hydrophila subsp. hydrophila (strain ATCC 7966 / DSM 30187 / BCRC 13018 / CCUG 14551 / JCM 1027 / KCTC 2358 / NCIMB 9240 / NCTC 8049).